Here is a 365-residue protein sequence, read N- to C-terminus: S-adenosylmethionine:tRNA ribosyltransferase-isomerase (365 aa).

It belongs to the QueA family. Monomer.

It is found in the cytoplasm. It catalyses the reaction 7-aminomethyl-7-carbaguanosine(34) in tRNA + S-adenosyl-L-methionine = epoxyqueuosine(34) in tRNA + adenine + L-methionine + 2 H(+). It participates in tRNA modification; tRNA-queuosine biosynthesis. Its function is as follows. Transfers and isomerizes the ribose moiety from AdoMet to the 7-aminomethyl group of 7-deazaguanine (preQ1-tRNA) to give epoxyqueuosine (oQ-tRNA). The chain is S-adenosylmethionine:tRNA ribosyltransferase-isomerase from Prochlorococcus marinus (strain NATL2A).